A 693-amino-acid polypeptide reads, in one-letter code: Golgin subfamily A member 6B (693 aa).

Residues 1 to 11 (MWPQPYLPPHP) are compositionally biased toward pro residues. Disordered stretches follow at residues 1 to 72 (MWPQ…SQYQ), 497 to 551 (LPGE…VERR), 629 to 650 (NPADEPTPGAPAPQELGAAGEQ), and 660 to 679 (NNVEPAPGAAREGSPHDNPT). Positions 77 to 611 (ALESSSVTIS…KLLELQELVL (535 aa)) form a coiled coil. Positions 537-551 (LPKEKADGTEQVERR) are enriched in basic and acidic residues.

This sequence belongs to the GOLGA6 family.

The polypeptide is Golgin subfamily A member 6B (GOLGA6B) (Homo sapiens (Human)).